A 3135-amino-acid polypeptide reads, in one-letter code: MTSLNTKSGTPVVPLLLRSDDASHTDTLVEEVSCSLGLGRDRIENILPSTAFQQDVIDCAGSEKQRSIGHVAYEISNDIDISKLAAAWKDTINRTPALRTCAFTSSSGETYQVILKDSFVFSWMFSTSADQKDAVVKDEAAAAASGPRCNRFVLLDDPIQKKILIWTFSHALVDTSFQERILGRVLKAYTHGHDELSNRPYTPESSDPEDDGLSLTPTDGSKTPETEGLHPATQYWKNYLSDLNASAFPHLTSPLAVPYPNAKSEHRITFTASSSSTWPSVAVCRTALAILLSRYTHSQEALFGVVTEQQQLLVNGPTRTVVPFRVHCASDQSLSDIIDVVNANDDAIRQFADVGLRSISSTGDDGVAASGFQTVLLVTEGDNEQSSSTFEILQKTEESELFMPCTNRALLLHCQIASDGLSIIARYDKSLIHSQQIARLLRQLGQLIQRLRGSPDKLPSAGELDISTSEDQAEIQSWNSHPIPSQPTLIHKEMLKTASLSPSKVAICAWNGEWTYSELDNITSRLAALIKFSTPDQEHAILPIYFEKSKWVVASMLAVIKAGHAFALIDPNDPPARVSQVVGQTGATVALTSKLYRSKVQGIIERCIIVDDDLVQSLICTCALKPDPTLAKVTPEDLAYVIFTSGSTGDPKGIMIEHRAFSSCALQFGSALGINSDTRALQFGSHAFGACLLEIMTTLIHGGCVCIPSDDDRMNNVPAFVNRANVNWMMATPSYMGTFQPDDVPGLKTLVLVGEQMSPSVNAIWAPRVQVLDGYGQSESSSICFVGKISSSGADPNNIGHSVGAHSWIIDPSDPNRLVPIGAIGELVIESPGIARDYIIPPPTENSPFFSTVPPWYPFKELPNGIKFYRTGDLARYASDGTVVCLGRMDSQVKIRGQRVELGAVETHLRQQLPDDMSIVVEAVKPSDLPTSTVLVAFLITEATKSVRDATILDLAATKAMSVKLEHVLPRHSIPSCYISMQHLPRTATGKVDRRKLRSIGRDMLAQQLQGTSFRPSQLSSTTTSSQSKLEEVWRQCLGLEPGAANINSTFFELGGHSITAIKMVNMARSAGIDLKVSDIYQNPTLAGLEAIVNGSAEPYAIIPTTTRDGPVEQSYSQGRLWFLDQLEVGALWYLIPYAVRMRGLVDIDALSRALMALEQRHETLRTTFEDCDGAGVQIIHKILSKKLRVVDAPDSDYLDLLKQEQTTPFDLTSEAGWRALLIRLNDTDYILSIVMHHIVSDGWSIDVLRHDLSQLYAAALQGRDLASAMNPLPIQYSDFAMWQKQEAQALEHEKQLDYWKRQLADCSPAKLPTDFPRPALLSGEAGVVPVSIDRQLYQNLRDFCNENNTTSFAVLLAAFRAAHYRLTGVDDAVIGTPIANRNRWELENIIGFFVNTQCMRITVDDQDTFGSLVSQVRATTTAAFENEDVPFERVVSTMLPGSRDLSRTPLAQLIFAVHSQKDLGRFELQGLESEVVASKAYTRFDIEFHLFQEADGLRGSCNFATDLFRPETVENMVSVFFQILRNGLEKPNIPISVLPLTDGIEELRRLDLLRIKKVEYPRDASLVDIFRTQVAAYPDSLAVVDSSSRLTYTELDLQSDRLAARLRRQGMPAETLVGVLAPRSCEAIVAIIGILKANLAYLPFDVKSPSARLEDILSSIPGQTIVLLGSDVPVPELSIPGLEFMRIVDAIECCDTNNLNGHAHVDNSNPTATSLAYVLFTSGSTGRPKGVMVEHRVIVRLMTSNIIPDFPVQPRSAHMFNIAFDGATYEIFFTLLNGGTLVCIDYMTTLDVKALQDVFLKEKINAACMAPALLKLYLTDARDALRGLDFLMAAGDRFDGQDAIEAQSLVRGQCYNGYGPTENGIMSTRYPIAVGDSFINGVPIGRAVNNSGAYVTDLNQQLVGVGVMGELVVTGDGLARGYFDPALNENRFIHIEVDGQRVRAYRTGDRVRYRVGDGLIEFFGRMDTQFKIRGNRIESAEVEAAMLGHGSVRDAAVVVQKDDGEKADLVGFVVIDHDHSLEGDANDNQVEGWQDHFETEMYADIGDIDPFTIGKDFKGWTSMYDGSEIDKVEMQEWLDDTIKTLRDGQAPGHVLEVGTGSGMILFNLGDGLQSYRGLEPSKSAAAFTNSVIKSVPSLASKAEVHVGTAQDVSQLTDLHPDLVVINSVAQYFPSPEYLAQVADTLIHIPGVKRLFFGDMRTNATNKHFLAARAIRTLGDTATKDFVRQKMAELEEREEELLVEPAFFTALQDRFPDLVHHVEILPKNMHATNELSAYRYAAVVHIRDSDSVPVHTIEKSTWVDFGASRMDRTSLLQFLRRSKGSPTVAISNIPFAKTIFERQIVESLEAEDESKLDGAVWISAVGSDADSRASLSVPDLRRLAEEAGFRLEVSAARQWSQSGALDAVFHHLPSPSDTRRTLIKFPNDNHLRSSATLSNRPLQGLQRRRATLQVRERLQSLLPSYMIPSSIVVLDQMPLNPNGKVDRKELARQARIMPKQQTALPVQAVPISDIEAILCDEATATFGMKVDISDDFFKLGGHSLLATKLISRVEQRFNVRVTVKDVFDNPVFANLAVVIREGLASRTTLTNSQDKQGWSARVAPRTETEITLCDEASKLLGIEVGITDNFFDLGGHSMMATKLAMRLGRRLDTTIVVKDIFDYPVLFQLSKKLESTDSGTDNEEVQVDDYTPFELLSLENPQDFIQRQICSQLNVSLESIQDMYQSTQMQKSFLFSPGTGSPRPLTPFYIDFPVDSDPPTLVNACHSLVQHIDMFRTVFVLASEQLYQVVLKHLEVPIETIVTNQNVNTATNDFLVEHAQDPIRLGESLIRIAILKQSSSVRVLLRLSHALYDGLSLEPIVRNLHILFNGMSLLPPTQFRRYMEYTANSQEKGFEFWRDVIGDSPMTILSDAGNGAYHREVSPSKALHLSKVVSVPSQAIRSSIATQATVFNSACALVLSKESRSSDVVFGRIVSGRQGLPVNCQDIIGPCTNAVPVRAHIGTDGNHHQMLRDMQDQYLRSLPFETLGFEEIKRNCTDWPDSTTNFACCVTYHNFEYHPESEVEQQRVEMGVLSKHVELRKDEPLYDLAIAGEVEPDGMSLKVTIIARAHLFEEERVQYFLEEVCNTFQTLNFSL.

Residues 70 to 458 (HVAYEISNDI…QRLRGSPDKL (389 aa)) are condensation 1. A disordered region spans residues 196 to 228 (LSNRPYTPESSDPEDDGLSLTPTDGSKTPETEG). The interval 499–896 (SLSPSKVAIC…GRMDSQVKIR (398 aa)) is adenylation 1. The 77-residue stretch at 1021 to 1097 (STTTSSQSKL…GLEAIVNGSA (77 aa)) folds into the Carrier 1 domain. Serine 1058 bears the O-(pantetheine 4'-phosphoryl)serine mark. The interval 1115-1542 (SYSQGRLWFL…NIPISVLPLT (428 aa)) is condensation 2. Residues 1571–1974 (FRTQVAAYPD…GRMDTQFKIR (404 aa)) form an adenylation 2 region. An S-adenosyl-L-methionine-dependent N-methyltransferase region spans residues 2042–2182 (MYADIGDIDP…FPSPEYLAQV (141 aa)). Carrier domains are found at residues 2509-2583 (VPIS…REGL) and 2603-2677 (APRT…ESTD). Serine 2543 and serine 2637 each carry O-(pantetheine 4'-phosphoryl)serine. The segment at 2721-3127 (QDMYQSTQMQ…QYFLEEVCNT (407 aa)) is condensation 3.

This sequence belongs to the NRP synthetase family.

It carries out the reaction 3 (R)-2-hydroxy-3-methylbutanoate + 3 L-phenylalanine + 3 S-adenosyl-L-methionine + 6 ATP = beauvericin + 6 AMP + 3 S-adenosyl-L-homocysteine + 6 diphosphate + 6 H(+). Beauvericin nonribosomal cyclodepsipeptide synthetase; part of the gene cluster that mediates the biosynthesis of beauvericin (BEA), a non-ribosomal cyclic hexadepsipeptide that shows antibiotic, antifungal, insecticidal, and cancer cell antiproliferative and antihaptotactic activity. Ketoisovalerate reductase BEA2 catalyzes the NADPH-specific reduction of ketoisovaleric acid to hydroxyisovalerate, a precursor for beauvericin biosynthesis. The nonribosomal cyclodepsipeptide synthetase BEA1 then catalyzes the formation of beauvericin via condensation and cyclization of 3 dipeptidol monomers, each composed of one unit of hydroxyisovalerate and one unit of N-methyl-phenylalanine. This is Beauvericin nonribosomal cyclodepsipeptide synthetase BEA1 from Gibberella fujikuroi (strain CBS 195.34 / IMI 58289 / NRRL A-6831) (Bakanae and foot rot disease fungus).